The chain runs to 375 residues: Succinyl-diaminopimelate desuccinylase (375 aa).

Zn(2+) is bound at residue His-66. Asp-68 is a catalytic residue. A Zn(2+)-binding site is contributed by Asp-99. Glu-133 (proton acceptor) is an active-site residue. Zn(2+)-binding residues include Glu-134, Glu-162, and His-348.

The protein belongs to the peptidase M20A family. DapE subfamily. In terms of assembly, homodimer. Requires Zn(2+) as cofactor. The cofactor is Co(2+).

The catalysed reaction is N-succinyl-(2S,6S)-2,6-diaminopimelate + H2O = (2S,6S)-2,6-diaminopimelate + succinate. It functions in the pathway amino-acid biosynthesis; L-lysine biosynthesis via DAP pathway; LL-2,6-diaminopimelate from (S)-tetrahydrodipicolinate (succinylase route): step 3/3. Catalyzes the hydrolysis of N-succinyl-L,L-diaminopimelic acid (SDAP), forming succinate and LL-2,6-diaminopimelate (DAP), an intermediate involved in the bacterial biosynthesis of lysine and meso-diaminopimelic acid, an essential component of bacterial cell walls. This chain is Succinyl-diaminopimelate desuccinylase, found in Shigella sonnei (strain Ss046).